Reading from the N-terminus, the 324-residue chain is uncharacterized protein (324 aa).

Belongs to the mgp1/MG371 family.

This is an uncharacterized protein from Mycoplasma genitalium (strain ATCC 33530 / DSM 19775 / NCTC 10195 / G37) (Mycoplasmoides genitalium).